Reading from the N-terminus, the 476-residue chain is Bifunctional protein HldE (476 aa).

A ribokinase region spans residues 1–318 (MKLDLTVLEQ…YTALHGDKLA (318 aa)). 195 to 198 (NLGE) is an ATP binding site. The active site involves D264. The tract at residues 344–476 (MTNGCFDILH…MIDTILDREG (133 aa)) is cytidylyltransferase.

It in the N-terminal section; belongs to the carbohydrate kinase PfkB family. The protein in the C-terminal section; belongs to the cytidylyltransferase family. Homodimer.

The catalysed reaction is D-glycero-beta-D-manno-heptose 7-phosphate + ATP = D-glycero-beta-D-manno-heptose 1,7-bisphosphate + ADP + H(+). It catalyses the reaction D-glycero-beta-D-manno-heptose 1-phosphate + ATP + H(+) = ADP-D-glycero-beta-D-manno-heptose + diphosphate. It participates in nucleotide-sugar biosynthesis; ADP-L-glycero-beta-D-manno-heptose biosynthesis; ADP-L-glycero-beta-D-manno-heptose from D-glycero-beta-D-manno-heptose 7-phosphate: step 1/4. Its pathway is nucleotide-sugar biosynthesis; ADP-L-glycero-beta-D-manno-heptose biosynthesis; ADP-L-glycero-beta-D-manno-heptose from D-glycero-beta-D-manno-heptose 7-phosphate: step 3/4. In terms of biological role, catalyzes the phosphorylation of D-glycero-D-manno-heptose 7-phosphate at the C-1 position to selectively form D-glycero-beta-D-manno-heptose-1,7-bisphosphate. Functionally, catalyzes the ADP transfer from ATP to D-glycero-beta-D-manno-heptose 1-phosphate, yielding ADP-D-glycero-beta-D-manno-heptose. This is Bifunctional protein HldE from Chromohalobacter salexigens (strain ATCC BAA-138 / DSM 3043 / CIP 106854 / NCIMB 13768 / 1H11).